A 251-amino-acid chain; its full sequence is MTIQLINESSNTEKFQQICDKWRLVHDRSAILALVLTDERLELRKLDEPKLGAIAVNFVDGTMAHRRKFGGGRGEAVAKAVGIKGDYLPTIIDATAGLGRDAFVLASVGCKVLLVERNPIVAALLEDGLVRAYADPEIGAFMQERMILADVRDISLLDVAQQAADVVYLDPMYPHKQKSALVKKEMRVFQHLVGADLDSDNFFVPAKALARKRVVVKRPDYAPFLAEQKPDFSQTTKNHRFDVYLSHLKSA.

S-adenosyl-L-methionine-binding positions include 100 to 101, 116 to 117, and Asp-170; these read RD and ER.

It belongs to the methyltransferase superfamily. RsmJ family.

It localises to the cytoplasm. It catalyses the reaction guanosine(1516) in 16S rRNA + S-adenosyl-L-methionine = N(2)-methylguanosine(1516) in 16S rRNA + S-adenosyl-L-homocysteine + H(+). Its function is as follows. Specifically methylates the guanosine in position 1516 of 16S rRNA. This Actinobacillus pleuropneumoniae serotype 3 (strain JL03) protein is Ribosomal RNA small subunit methyltransferase J.